The primary structure comprises 381 residues: Molybdenum import ATP-binding protein ModC (381 aa).

The ABC transporter domain maps to 5–238 (SRSIQAQFRG…PALPLAASRD (234 aa)). An ATP-binding site is contributed by 37-44 (GPSGCGKS). Positions 297 to 367 (NTSILNVLPA…VKGVALAPGR (71 aa)) constitute a Mop domain.

It belongs to the ABC transporter superfamily. Molybdate importer (TC 3.A.1.8) family. In terms of assembly, the complex is composed of two ATP-binding proteins (ModC), two transmembrane proteins (ModB) and a solute-binding protein (ModA).

The protein resides in the cell inner membrane. The enzyme catalyses molybdate(out) + ATP + H2O = molybdate(in) + ADP + phosphate + H(+). Its function is as follows. Part of the ABC transporter complex ModABC involved in molybdenum import. Responsible for energy coupling to the transport system. The polypeptide is Molybdenum import ATP-binding protein ModC (Rhodopseudomonas palustris (strain BisB18)).